Consider the following 173-residue polypeptide: Bifunctional protein PyrR (173 aa).

A PRPP-binding motif is present at residues 93-105 (IILVDDVLYTGRT).

The protein belongs to the purine/pyrimidine phosphoribosyltransferase family. PyrR subfamily. As to quaternary structure, homodimer and homohexamer; in equilibrium.

The enzyme catalyses UMP + diphosphate = 5-phospho-alpha-D-ribose 1-diphosphate + uracil. Regulates transcriptional attenuation of the pyrimidine nucleotide (pyr) operon by binding in a uridine-dependent manner to specific sites on pyr mRNA. This disrupts an antiterminator hairpin in the RNA and favors formation of a downstream transcription terminator, leading to a reduced expression of downstream genes. Functionally, also displays a weak uracil phosphoribosyltransferase activity which is not physiologically significant. This Streptococcus equi subsp. zooepidemicus (strain MGCS10565) protein is Bifunctional protein PyrR.